We begin with the raw amino-acid sequence, 197 residues long: uncharacterized protein (197 aa).

Disordered stretches follow at residues 1-30 and 115-174; these read MSDD…PKVV and PSLK…KQEL. A compositionally biased stretch (low complexity) spans 21–30; that stretch reads KPTSTTPKVV. Over residues 123 to 137 the composition is skewed to acidic residues; that stretch reads KVDEDDDQIYEDKEE. Basic residues predominate over residues 157-170; sequence KSNKKVAPKQKKKS.

This is an uncharacterized protein from Dictyostelium discoideum (Social amoeba).